Reading from the N-terminus, the 413-residue chain is MVVDTKLYDILEVHFEASAEEIKKSYKRLALLHHPDKAPIHEKEEAAERFRGVQEAYDILKDPESREMYDMYGMNSDSNSQFDGGVNLDDVLAQMFGMNFEAGGPGKNVPRDRKRRGSDVIHDYEISLEDMFKGKEVKLRATRNTLCPRCQGRGGKRFAKEKPCLSCDGKGVKQHLKHVGPHHVTNSQVICDTCNGKGVSFRGKDRCKHCKGSGTVPEQRMLSFFVNRSAKENDKIIQRGMADEAYGITPGDVILQLHQKPHPVFERLGDDLKAKLKISLAEALTGFNRVILTTLDGRGLEYVQPIGKILHPGDCLIIPGEGMYKDSKTDLRGDLYLEVDIEFPKDGLIGTTEIEILRDILPSIPKVSVMDDTLIDSVRGVPGDISHFGGDARYANEDYGDETYEGVPECQAQ.

The region spanning 6-73 (KLYDILEVHF…ESREMYDMYG (68 aa)) is the J domain. A CR-type zinc finger spans residues 134–219 (GKEVKLRATR…CKGSGTVPEQ (86 aa)). 4 CXXCXGXG motif repeats span residues 147-154 (CPRCQGRG), 164-171 (CLSCDGKG), 191-198 (CDTCNGKG), and 207-214 (CKHCKGSG). Position 410 is a cysteine methyl ester (Cys-410). Residue Cys-410 is the site of S-farnesyl cysteine attachment. Residues 411–413 (QAQ) constitute a propeptide, removed in mature form.

The protein localises to the endoplasmic reticulum membrane. This is DnaJ protein homolog xdj1 (xdj1) from Schizosaccharomyces pombe (strain 972 / ATCC 24843) (Fission yeast).